A 147-amino-acid polypeptide reads, in one-letter code: Hemoglobin subunit gamma (147 aa).

One can recognise a Globin domain in the interval 3 to 147; sequence DFTAEEKAAI…VASAVARKYH (145 aa). Heme b-binding residues include His64 and His93.

The protein belongs to the globin family. As to quaternary structure, heterotetramer of two alpha chains and two gamma chains in fetal hemoglobin (Hb F). As to expression, red blood cells.

Its function is as follows. Gamma chains make up the fetal hemoglobin F, in combination with alpha chains. The chain is Hemoglobin subunit gamma (HBG) from Trichechus manatus (Caribbean manatee).